The sequence spans 619 residues: Sodium-coupled monocarboxylate transporter 2 (619 aa).

The Extracellular portion of the chain corresponds to 1-9; the sequence is MRVKNFEAW. The helical transmembrane segment at 10-30 threads the bilayer; that stretch reads DYVVFAGLFVISSGIGVFFAI. Topologically, residues 31–47 are cytoplasmic; it reads KERKKTTSREFLVGGRQ. The chain crosses the membrane as a helical span at residues 48 to 68; the sequence is MSFGPVALSLTASFMSAVTVL. Residues 69 to 80 are Extracellular-facing; it reads GTPAEVYRFGAS. Residues 81–101 form a helical membrane-spanning segment; sequence FFLFLISYVFVVFFTSELFLP. The Cytoplasmic segment spans residues 102–128; sequence VFYRSGITSTYEYLQLRFNKPVRYAAT. The chain crosses the membrane as a helical span at residues 129 to 149; the sequence is IIYIVQTILYTGVVVYAPALA. The Extracellular segment spans residues 150–157; sequence LNQVTGFN. The helical transmembrane segment at 158-178 threads the bilayer; that stretch reads LWASVFATGIVCTFYCSLGGL. At 179–180 the chain is on the cytoplasmic side; the sequence is KA. Residues 181-201 traverse the membrane as a helical segment; the sequence is VVWTDAFQMVVMIVGFLTVLI. Residues 202 to 235 are Extracellular-facing; sequence QGSNHVGGFNNVLEKAGNGSRLHIVDFDVDPLRR. Asn219 carries N-linked (GlcNAc...) asparagine glycosylation. The chain crosses the membrane as a helical span at residues 236–256; that stretch reads HTFWTITIGGTFTWLGVYGVN. Over 257-275 the chain is Cytoplasmic; it reads QSTIQRCISCKTEKHAKLA. Residues 276-296 form a helical membrane-spanning segment; that stretch reads LYFNLLGLWIIVACAVFSGLI. Residues 297-321 are Extracellular-facing; the sequence is MYSHFKDCDPWTSGVISAPDQLMPY. The helical transmembrane segment at 322–342 threads the bilayer; sequence FVMEIFATMPGLPGLFVACAF. The Cytoplasmic segment spans residues 343-385; sequence SGTLSTVAASINALATVTFEDFVKSCFPHLSDKLSTWISKGLC. A helical membrane pass occupies residues 386-406; that stretch reads ILFGIMCTSMAVVASLMGSVV. At 407-411 the chain is on the extracellular side; that stretch reads QAALS. The helical transmembrane segment at 412–432 threads the bilayer; sequence IHGMCGGPMLGLFTLGLVFPF. Residues 433 to 437 are Cytoplasmic-facing; the sequence is VNWKG. Residues 438–458 traverse the membrane as a helical segment; the sequence is ALGGLLTGITLSFWVAIGSFI. At 459-504 the chain is on the extracellular side; sequence YPAPESKTLPLPLSTEHCVELNITTTVAPQISSRPVLADTWYSLSY. Asn480 carries an N-linked (GlcNAc...) asparagine glycan. A helical membrane pass occupies residues 505 to 525; sequence LYFSAVGCLGCIAAGIIISFL. The Cytoplasmic segment spans residues 526 to 619; that stretch reads TGKQRGKDID…NSVPEKTTYF (94 aa).

Belongs to the sodium:solute symporter (SSF) (TC 2.A.21) family. As to expression, expressed in the cortical region of the kidney corresponding to the proximal tubule. Expressed in Mueller cells of the inner retina (at protein level). Isoform 1 is expressed in the retina, kidney, small intestine and skeletal muscle. Isoform 2 is not detected in the kidney, small intestine and skeletal muscle. In the kidney, expressed predominantly in tubular epithelial cells of the cortical region and in the convoluted portions of the proximal tubule (pars convoluta). In the small intestine, its expression is highest in the proximal part and gradually decreased towards the distal end. Expressed in the neural retina. Not detected in the caecum and colon.

Its subcellular location is the apical cell membrane. It catalyses the reaction (S)-lactate(out) + Na(+)(out) = (S)-lactate(in) + Na(+)(in). It carries out the reaction nicotinate(out) + Na(+)(out) = nicotinate(in) + Na(+)(in). The enzyme catalyses pyruvate(out) + Na(+)(out) = pyruvate(in) + Na(+)(in). The catalysed reaction is propanoate(out) + Na(+)(out) = propanoate(in) + Na(+)(in). It catalyses the reaction butanoate(out) + Na(+)(out) = butanoate(in) + Na(+)(in). It carries out the reaction acetoacetate(out) + Na(+)(out) = acetoacetate(in) + Na(+)(in). In terms of biological role, acts as an electroneutral and low-affinity sodium (Na(+))-dependent sodium-coupled solute transporter. Catalyzes the transport across the plasma membrane of many monocarboxylates such as lactate, pyruvate, nicotinate, propionate, butyrate and beta-D-hydroxybutyrate. May be responsible for the first step of reabsorption of monocarboxylates from the lumen of the proximal tubule of the kidney and the small intestine. May play also a role in monocarboxylates transport in the retina. Mediates electroneutral uptake of lactate, with a stoichiometry of 2 Na(+) for each lactate. The chain is Sodium-coupled monocarboxylate transporter 2 (Slc5a12) from Mus musculus (Mouse).